The primary structure comprises 142 residues: Large ribosomal subunit protein bL21 (142 aa).

The span at 74–84 (RRRQNSKRTRG) shows a compositional bias: basic residues. Residues 74–142 (RRRQNSKRTR…KAAAKAESAE (69 aa)) are disordered. Residues 107 to 125 (KAAEKKAPKADAAEGEAAK) are compositionally biased toward basic and acidic residues. Positions 126–135 (PKKAAPKKAA) are enriched in basic residues.

This sequence belongs to the bacterial ribosomal protein bL21 family. In terms of assembly, part of the 50S ribosomal subunit. Contacts protein L20.

Functionally, this protein binds to 23S rRNA in the presence of protein L20. The sequence is that of Large ribosomal subunit protein bL21 from Brucella melitensis biotype 2 (strain ATCC 23457).